Reading from the N-terminus, the 37-residue chain is Cytochrome b6-f complex subunit 5 (37 aa).

A helical membrane pass occupies residues 5–25 (LLSGIVLGMIPITLAGLFVTA).

It belongs to the PetG family. In terms of assembly, the 4 large subunits of the cytochrome b6-f complex are cytochrome b6, subunit IV (17 kDa polypeptide, PetD), cytochrome f and the Rieske protein, while the 4 small subunits are PetG, PetL, PetM and PetN. The complex functions as a dimer.

It is found in the plastid. The protein resides in the chloroplast thylakoid membrane. Functionally, component of the cytochrome b6-f complex, which mediates electron transfer between photosystem II (PSII) and photosystem I (PSI), cyclic electron flow around PSI, and state transitions. PetG is required for either the stability or assembly of the cytochrome b6-f complex. In Mesostigma viride (Green alga), this protein is Cytochrome b6-f complex subunit 5.